The following is a 149-amino-acid chain: Glutamyl-tRNA(Gln) amidotransferase subunit C, mitochondrial (149 aa).

The N-terminal 25 residues, 1–25 (MNHLHRLFRITQVDRPVLLAITRRL), are a transit peptide targeting the mitochondrion.

It belongs to the GatC family. Subunit of the heterotrimeric GatCAB amidotransferase (AdT) complex, composed of A, B and C subunits.

The protein resides in the mitochondrion. The catalysed reaction is L-glutamyl-tRNA(Gln) + L-glutamine + ATP + H2O = L-glutaminyl-tRNA(Gln) + L-glutamate + ADP + phosphate + H(+). Allows the formation of correctly charged Gln-tRNA(Gln) through the transamidation of misacylated Glu-tRNA(Gln) in the mitochondria. The reaction takes place in the presence of glutamine and ATP through an activated gamma-phospho-Glu-tRNA(Gln). This Branchiostoma floridae (Florida lancelet) protein is Glutamyl-tRNA(Gln) amidotransferase subunit C, mitochondrial.